Consider the following 211-residue polypeptide: Transcriptional regulator NarO (211 aa).

The HTH bat-type domain maps to 154 to 205 (LTARQREVLETAHEMGYFEHPREANATEVAAALDINRSTFTEHLSAAQSKLL).

Its function is as follows. Activates transcription of the denitrifying genes (nitrate reductase narA and nitrite reductase nirK) under anaerobic conditions. This chain is Transcriptional regulator NarO, found in Haloferax volcanii (strain ATCC 29605 / DSM 3757 / JCM 8879 / NBRC 14742 / NCIMB 2012 / VKM B-1768 / DS2) (Halobacterium volcanii).